A 943-amino-acid polypeptide reads, in one-letter code: AP-1 complex subunit beta-1 (943 aa).

N6-acetyllysine is present on Lys-318. Tyr-574 is modified (3'-nitrotyrosine). The segment at Gly-584–Val-621 is disordered. Over residues Pro-594–Gly-616 the composition is skewed to low complexity.

It belongs to the adaptor complexes large subunit family. Adaptor protein complex 1 (AP-1) is a heterotetramer composed of two large adaptins (gamma-type subunit AP1G1 and beta-type subunit AP1B1), a medium adaptin (mu-type subunit AP1M1 or AP1M2) and a small adaptin (sigma-type subunit AP1S1 or AP1S2 or AP1S3). In terms of tissue distribution, widely expressed.

Its subcellular location is the cytoplasmic vesicle. It is found in the clathrin-coated vesicle membrane. It localises to the golgi apparatus. In terms of biological role, subunit of clathrin-associated adaptor protein complex 1 that plays a role in protein sorting in the late-Golgi/trans-Golgi network (TGN) and/or endosomes. The AP complexes mediate both the recruitment of clathrin to membranes and the recognition of sorting signals within the cytosolic tails of transmembrane cargo molecules. In Mus musculus (Mouse), this protein is AP-1 complex subunit beta-1 (Ap1b1).